Consider the following 827-residue polypeptide: MQNSLSVPPRDEGESNIPSGTIQSRKGLQNKSQFRTIAPKIVPKVLTSRMLPCHSPSHSDQVNLGPSINSKPLGMSTQNYALMQVAGQEGTFSLVALPHVASAQPIQKPRMSLPENLKLPIPRYQPPRNSKGSRKKPILIFPKSGCSKAPAQTQMCPQMSPSPPHHPELLYKPSPFEEVPSLEQAPASISTAALTNGSDHGDLRPPVTNTHGSLNPPATPASPTPEEPAKQDLTDLSGKAHFVSKITSSKPSAVVSEKFKEQVYLAKTMTSLSPAILGNAVQLISSVPKGKLPIPPYSRMKTTEVYKIKSDANIAGFSLPGPKADCDKISSTTEGFNAATKVASKLPVPQVSQQSACESAFCPPTKLDLNHKTKLNSGAAKRKGRKWKVPDEILAFQGKRRKCIINKCRDGKERVKNDPQEFRDQKLGTLKKYRSIMPKPIMVIPTLASLASPTIQSQMLGGLGQDVLLNNSLTPKYLGCKQDNSSSPKPSSVFRNGFSGIKKPWHRCHVCNHHFQFKQHLQDHMNTHTNRRPYSCRICRKSYVRPGSLSTHMKLHHGENRLKKLMCCEFCAKVFGHIRVYFGHLKEVHRVVISTEPAPSELQPGDIPKNRDVSVQGMEGSLERENKSNLEEDFLLNQAGEVKLQIKCGRCQITAQSFAEIKFHLLYVHGEEIQGRLQEGTFPGSKGTQEELVQHASHDWKRHPERGKPEKVHSSSEESHACPRLKRQLHLHQNGVEMPIENEGPQSGTNKPRETCQGPECPGLHTVLLWSRSGFNCLLCAEMLGQKEDLLHHWKHQHNCEDPSKLWAILNTVSNQGVIELSSEAEK.

Disordered stretches follow at residues Met1 to Lys31, Leu117 to Pro173, and Ala193 to Asp232. Composition is skewed to polar residues over residues Asn16–Lys31 and Pro150–Met159. Pro residues predominate over residues Pro217–Glu226. C2H2-type zinc fingers lie at residues His506–His528, Tyr534–His556, and Met566–His589. Residues Phe682–Pro723 form a disordered region. Basic and acidic residues-rich tracts occupy residues Thr688–Asp699 and Arg706–Ala721. Residues Phe775 to His798 form a C2H2-type 4 zinc finger.

The protein localises to the nucleus. Acts as a transcriptional repressor. The polypeptide is Zinc finger protein 438 (ZNF438) (Pongo abelii (Sumatran orangutan)).